The primary structure comprises 431 residues: MPVLIESIGNLERRLTFSVPEDRLESHVDERLREIARAARINGFRAGKVPAKVIEQRFGEKVRAEVLDSLLRETLDSAIRAHSLRLAGAARIDHANEGGLNFVATFEVVPDFGEIDVSKLGVVRRTAKVTDVDIDQMIENLRLQRRTWRVAEHGAQVGYLVALETWSQAGDERLPIEGVEAGSTILGSGVMFEQIERGLEGLSKGDENVLDVTFPDDWRVMQLAGKAVQVHVKVIEVSEPVLLEVNEEFIKSFGVKSGKLEDFRADIRANLERELKGALVSHLRREIGEQLIAAYAHVEMPPRLVEKEARLMLAKQIEQIRLSGRDPTVIPDDAHIGFMDAACKRVLVGLLVGEIAGRNRLRLDPMRVTETLHLIASTYEEPEEVFQMYRNDPKLMEGVQSLVMEEQVIEWIADRAQKTEQVLSFQEAIQQ.

Residues 158 to 243 (GYLVALETWS…VIEVSEPVLL (86 aa)) enclose the PPIase FKBP-type domain.

The protein belongs to the FKBP-type PPIase family. Tig subfamily.

The protein localises to the cytoplasm. It carries out the reaction [protein]-peptidylproline (omega=180) = [protein]-peptidylproline (omega=0). In terms of biological role, involved in protein export. Acts as a chaperone by maintaining the newly synthesized protein in an open conformation. Functions as a peptidyl-prolyl cis-trans isomerase. This chain is Trigger factor, found in Xylella fastidiosa (strain M23).